A 180-amino-acid polypeptide reads, in one-letter code: ATP-dependent protease subunit HslV (180 aa).

Threonine 7 is an active-site residue. The Na(+) site is built by alanine 162, cysteine 165, and threonine 168.

This sequence belongs to the peptidase T1B family. HslV subfamily. A double ring-shaped homohexamer of HslV is capped on each side by a ring-shaped HslU homohexamer. The assembly of the HslU/HslV complex is dependent on binding of ATP.

The protein resides in the cytoplasm. It carries out the reaction ATP-dependent cleavage of peptide bonds with broad specificity.. Its activity is regulated as follows. Allosterically activated by HslU binding. In terms of biological role, protease subunit of a proteasome-like degradation complex believed to be a general protein degrading machinery. The sequence is that of ATP-dependent protease subunit HslV from Dichelobacter nodosus (strain VCS1703A).